The chain runs to 177 residues: Ribosome maturation factor RimM (177 aa).

The region spanning 104–177 is the PRC barrel domain; that stretch reads GVDGIWADLI…IIKVKLMEGM (74 aa).

It belongs to the RimM family. In terms of assembly, binds ribosomal protein uS19.

Its subcellular location is the cytoplasm. Functionally, an accessory protein needed during the final step in the assembly of 30S ribosomal subunit, possibly for assembly of the head region. Essential for efficient processing of 16S rRNA. May be needed both before and after RbfA during the maturation of 16S rRNA. It has affinity for free ribosomal 30S subunits but not for 70S ribosomes. In Magnetococcus marinus (strain ATCC BAA-1437 / JCM 17883 / MC-1), this protein is Ribosome maturation factor RimM.